Consider the following 205-residue polypeptide: Glycerol-3-phosphate acyltransferase (205 aa).

6 helical membrane-spanning segments follow: residues leucine 5–alanine 25, isoleucine 56–leucine 76, valine 84–phenylalanine 104, isoleucine 114–leucine 134, leucine 144–phenylalanine 164, and histidine 165–histidine 185.

This sequence belongs to the PlsY family. As to quaternary structure, probably interacts with PlsX.

Its subcellular location is the cell membrane. The catalysed reaction is an acyl phosphate + sn-glycerol 3-phosphate = a 1-acyl-sn-glycero-3-phosphate + phosphate. Its pathway is lipid metabolism; phospholipid metabolism. Functionally, catalyzes the transfer of an acyl group from acyl-phosphate (acyl-PO(4)) to glycerol-3-phosphate (G3P) to form lysophosphatidic acid (LPA). This enzyme utilizes acyl-phosphate as fatty acyl donor, but not acyl-CoA or acyl-ACP. The chain is Glycerol-3-phosphate acyltransferase from Shouchella clausii (strain KSM-K16) (Alkalihalobacillus clausii).